Consider the following 860-residue polypeptide: DNA mismatch repair protein MutS (860 aa).

608-615 (GPNMAGKS) contributes to the ATP binding site.

It belongs to the DNA mismatch repair MutS family.

Its function is as follows. This protein is involved in the repair of mismatches in DNA. It is possible that it carries out the mismatch recognition step. This protein has a weak ATPase activity. This is DNA mismatch repair protein MutS from Borrelia turicatae (strain 91E135).